The following is a 465-amino-acid chain: Asparagine--tRNA ligase (465 aa).

The protein belongs to the class-II aminoacyl-tRNA synthetase family. Homodimer.

The protein localises to the cytoplasm. The catalysed reaction is tRNA(Asn) + L-asparagine + ATP = L-asparaginyl-tRNA(Asn) + AMP + diphosphate + H(+). This Pseudoalteromonas atlantica (strain T6c / ATCC BAA-1087) protein is Asparagine--tRNA ligase.